Reading from the N-terminus, the 360-residue chain is Peptide chain release factor 1 (360 aa).

Q235 bears the N5-methylglutamine mark. The segment at 285–314 (KRQQAEASTRRNLLGSGDRSDRNRTYNFPQ) is disordered.

Belongs to the prokaryotic/mitochondrial release factor family. Methylated by PrmC. Methylation increases the termination efficiency of RF1.

It localises to the cytoplasm. Functionally, peptide chain release factor 1 directs the termination of translation in response to the peptide chain termination codons UAG and UAA. This chain is Peptide chain release factor 1, found in Klebsiella pneumoniae subsp. pneumoniae (strain ATCC 700721 / MGH 78578).